A 207-amino-acid chain; its full sequence is rRNA N(6)-adenosine-methyltransferase METTL5 (207 aa).

S-adenosyl-L-methionine-binding positions include glutamine 25, threonine 28, glycine 56, cysteine 59, valine 61, aspartate 78, and 105–106 (DV).

Belongs to the methyltransferase superfamily. PrmA family.

It is found in the nucleus. The protein resides in the presynapse. It localises to the postsynapse. The enzyme catalyses adenosine(1832) in 18S rRNA + S-adenosyl-L-methionine = N(6)-methyladenosine(1832) in 18S rRNA + S-adenosyl-L-homocysteine + H(+). With respect to regulation, rRNA N6-adenosine-methyltransferase activity is inhibited by zinc. Its function is as follows. Catalytic subunit of a heterodimer with TRMT112, which specifically methylates the 6th position of adenine in position 1832 of 18S rRNA. N6-methylation of adenine(1832) in 18S rRNA resides in the decoding center of 18S rRNA and is required for translation and embryonic stem cells (ESCs) pluripotency and differentiation. The sequence is that of rRNA N(6)-adenosine-methyltransferase METTL5 from Danio rerio (Zebrafish).